The chain runs to 269 residues: Regulatory protein RecX (269 aa).

This sequence belongs to the RecX family.

It is found in the cytoplasm. Its function is as follows. Modulates RecA activity. The chain is Regulatory protein RecX from Lactococcus lactis subsp. cremoris (strain SK11).